The sequence spans 302 residues: 4-hydroxy-tetrahydrodipicolinate synthase (302 aa).

Thr-57 contributes to the pyruvate binding site. The active-site Proton donor/acceptor is Tyr-145. Catalysis depends on Lys-173, which acts as the Schiff-base intermediate with substrate. A pyruvate-binding site is contributed by Ile-213.

Belongs to the DapA family. In terms of assembly, homotetramer; dimer of dimers.

It is found in the cytoplasm. The enzyme catalyses L-aspartate 4-semialdehyde + pyruvate = (2S,4S)-4-hydroxy-2,3,4,5-tetrahydrodipicolinate + H2O + H(+). Its pathway is amino-acid biosynthesis; L-lysine biosynthesis via DAP pathway; (S)-tetrahydrodipicolinate from L-aspartate: step 3/4. Its function is as follows. Catalyzes the condensation of (S)-aspartate-beta-semialdehyde [(S)-ASA] and pyruvate to 4-hydroxy-tetrahydrodipicolinate (HTPA). This chain is 4-hydroxy-tetrahydrodipicolinate synthase, found in Corynebacterium aurimucosum (strain ATCC 700975 / DSM 44827 / CIP 107346 / CN-1) (Corynebacterium nigricans).